A 635-amino-acid chain; its full sequence is Threonine--tRNA ligase (635 aa).

Residues 1 to 61 (MIKITLKDGS…KEDAALELLT (61 aa)) enclose the TGS domain. A catalytic region spans residues 242–532 (DHRKLGQELD…LTEHFAGAFP (291 aa)). Zn(2+) contacts are provided by Cys333, His384, and His509.

This sequence belongs to the class-II aminoacyl-tRNA synthetase family. As to quaternary structure, homodimer. Zn(2+) is required as a cofactor.

Its subcellular location is the cytoplasm. The catalysed reaction is tRNA(Thr) + L-threonine + ATP = L-threonyl-tRNA(Thr) + AMP + diphosphate + H(+). In terms of biological role, catalyzes the attachment of threonine to tRNA(Thr) in a two-step reaction: L-threonine is first activated by ATP to form Thr-AMP and then transferred to the acceptor end of tRNA(Thr). Also edits incorrectly charged L-seryl-tRNA(Thr). The polypeptide is Threonine--tRNA ligase (Desulforamulus reducens (strain ATCC BAA-1160 / DSM 100696 / MI-1) (Desulfotomaculum reducens)).